The primary structure comprises 129 residues: Lysozyme C-1 (129 aa).

The 129-residue stretch at 1–129 (KVFERCELAR…VSSYVEGCTL (129 aa)) folds into the C-type lysozyme domain. 4 cysteine pairs are disulfide-bonded: Cys6/Cys127, Cys30/Cys115, Cys65/Cys81, and Cys77/Cys95. Catalysis depends on residues Glu35 and Asp53.

This sequence belongs to the glycosyl hydrolase 22 family. In terms of assembly, monomer.

The catalysed reaction is Hydrolysis of (1-&gt;4)-beta-linkages between N-acetylmuramic acid and N-acetyl-D-glucosamine residues in a peptidoglycan and between N-acetyl-D-glucosamine residues in chitodextrins.. Its function is as follows. Lysozymes have primarily a bacteriolytic function; those in tissues and body fluids are associated with the monocyte-macrophage system and enhance the activity of immunoagents. The chain is Lysozyme C-1 from Capra hircus (Goat).